The chain runs to 245 residues: Ribosomal RNA large subunit methyltransferase E (245 aa).

Positions 83, 85, 111, 127, and 156 each coordinate S-adenosyl-L-methionine. K196 (proton acceptor) is an active-site residue.

This sequence belongs to the class I-like SAM-binding methyltransferase superfamily. RNA methyltransferase RlmE family.

Its subcellular location is the cytoplasm. The enzyme catalyses uridine(2552) in 23S rRNA + S-adenosyl-L-methionine = 2'-O-methyluridine(2552) in 23S rRNA + S-adenosyl-L-homocysteine + H(+). In terms of biological role, specifically methylates the uridine in position 2552 of 23S rRNA at the 2'-O position of the ribose in the fully assembled 50S ribosomal subunit. The polypeptide is Ribosomal RNA large subunit methyltransferase E (Polaromonas naphthalenivorans (strain CJ2)).